The following is a 410-amino-acid chain: Platelet-activating factor acetylhydrolase IB subunit alpha (410 aa).

Residues 1-38 (MVLSQRQRDELNRAIADYLRSNGYEEAYSVFKKEAELD) form a required for self-association and interaction with PAFAH1B2 and PAFAH1B3 region. An interaction with NDE1 region spans residues 1–66 (MVLSQRQRDE…SVIRLQKKVM (66 aa)). The tract at residues 1–102 (MVLSQRQRDE…EWIPRPPEKY (102 aa)) is interaction with NDEL1. In terms of domain architecture, LisH spans 7 to 39 (QRDELNRAIADYLRSNGYEEAYSVFKKEAELDM). Lysine 53 is modified (N6-acetyllysine). The stretch at 56 to 82 (TSVIRLQKKVMELESKLNEAKEEFTSG) forms a coiled coil. Positions 83-410 (GPLGQKRDPK…DQTVKVWECR (328 aa)) are interaction with dynein and dynactin. WD repeat units lie at residues 106–147 (GHRS…RTLK), 148–187 (GHTDSVQDISFDHSGKLLASCSADMTIKLWDFQGFECIRT), 190–229 (GHDHNVSSVAIMPNGDHIVSASRDKTIKMWEVQTGYCVKT), 232–271 (GHREWVRMVRPNQDGTLIASCSNDQTVRVWVVATKECKAE), 274–333 (EHEH…CLMT), 336–377 (GHDN…KTLN), and 379–410 (HEHFVTSLDFHKTAPYVVTGFVDQTVKVWECR). Serine 109 carries the phosphoserine modification. Residues 367 to 409 (YKNKRCMKTLNAHEHFVTSLDFHKTAPYVVTGFVDQTVKVWEC) form an interaction with DCX region. The interaction with NDEL1 stretch occupies residues 388–410 (FHKTAPYVVTGFVDQTVKVWECR).

Belongs to the WD repeat LIS1/nudF family. In terms of assembly, can self-associate. Component of the cytosolic PAF-AH (I) heterotetrameric enzyme, which is composed of PAFAH1B1 (beta), PAFAH1B2 (alpha2) and PAFAH1B3 (alpha1) subunits. The catalytic activity of the enzyme resides in the alpha1 (PAFAH1B3) and alpha2 (PAFAH1B2) subunits, whereas the beta subunit (PAFAH1B1) has regulatory activity. Trimer formation is not essential for the catalytic activity. Interacts with the catalytic dimer of PAF-AH (I) heterotetrameric enzyme: interacts with PAFAH1B2 homodimer (alpha2/alpha2 homodimer), PAFAH1B3 homodimer (alpha1/alpha1 homodimer) and PAFAH1B2-PAFAH1B3 heterodimer (alpha2/alpha1 heterodimer). Interacts with DCX, dynein, dynactin, IQGAP1, KATNB1, NDE1, NDEL1, NUDC and RSN. Interacts with DISC1, and this interaction is enhanced by NDEL1. Interacts with DAB1 when DAB1 is phosphorylated in response to RELN/reelin signaling. Interacts with INTS13. Interacts with DCDC1.

It is found in the cytoplasm. The protein localises to the cytoskeleton. Its subcellular location is the microtubule organizing center. It localises to the centrosome. The protein resides in the spindle. It is found in the nucleus membrane. Its function is as follows. Regulatory subunit (beta subunit) of the cytosolic type I platelet-activating factor (PAF) acetylhydrolase (PAF-AH (I)), an enzyme that catalyzes the hydrolyze of the acetyl group at the sn-2 position of PAF and its analogs and participates in PAF inactivation. Regulates the PAF-AH (I) activity in a catalytic dimer composition-dependent manner. Positively regulates the activity of the minus-end directed microtubule motor protein dynein. May enhance dynein-mediated microtubule sliding by targeting dynein to the microtubule plus end. Required for several dynein- and microtubule-dependent processes such as the maintenance of Golgi integrity, the peripheral transport of microtubule fragments and the coupling of the nucleus and centrosome. Required during brain development for the proliferation of neuronal precursors and the migration of newly formed neurons from the ventricular/subventricular zone toward the cortical plate. Neuronal migration involves a process called nucleokinesis, whereby migrating cells extend an anterior process into which the nucleus subsequently translocates. During nucleokinesis dynein at the nuclear surface may translocate the nucleus towards the centrosome by exerting force on centrosomal microtubules. Also required for proper activation of Rho GTPases and actin polymerization at the leading edge of locomoting cerebellar neurons and postmigratory hippocampal neurons in response to calcium influx triggered via NMDA receptors. May also play a role in other forms of cell locomotion including the migration of fibroblasts during wound healing. Required for dynein recruitment to microtubule plus ends and BICD2-bound cargos. May modulate the Reelin pathway through interaction of the PAF-AH (I) catalytic dimer with VLDLR. The chain is Platelet-activating factor acetylhydrolase IB subunit alpha from Pan troglodytes (Chimpanzee).